The following is a 173-amino-acid chain: ATP synthase subunit beta, mitochondrial (173 aa).

Belongs to the ATPase alpha/beta chains family. In terms of assembly, F-type ATPases have 2 components, CF(1) - the catalytic core - and CF(0) - the membrane proton channel. CF(1) has five subunits: alpha(3), beta(3), gamma(1), delta(1), epsilon(1). CF(0) has three main subunits: a, b and c.

It is found in the mitochondrion. It localises to the mitochondrion inner membrane. It catalyses the reaction ATP + H2O + 4 H(+)(in) = ADP + phosphate + 5 H(+)(out). Functionally, mitochondrial membrane ATP synthase (F(1)F(0) ATP synthase or Complex V) produces ATP from ADP in the presence of a proton gradient across the membrane which is generated by electron transport complexes of the respiratory chain. F-type ATPases consist of two structural domains, F(1) - containing the extramembraneous catalytic core and F(0) - containing the membrane proton channel, linked together by a central stalk and a peripheral stalk. During catalysis, ATP synthesis in the catalytic domain of F(1) is coupled via a rotary mechanism of the central stalk subunits to proton translocation. Subunits alpha and beta form the catalytic core in F(1). Rotation of the central stalk against the surrounding alpha(3)beta(3) subunits leads to hydrolysis of ATP in three separate catalytic sites on the beta subunits. The protein is ATP synthase subunit beta, mitochondrial (ATPB) of Actinidia deliciosa (Kiwi).